Here is a 72-residue protein sequence, read N- to C-terminus: Bradykinin-potentiating peptide BmKbpp (72 aa).

A signal peptide spans 1 to 22; sequence MNKKTLLVIFFVTMLIVDEVNS. A propeptide spanning residues 70-72 is cleaved from the precursor; it reads RRR.

It belongs to the non-disulfide-bridged peptide (NDBP) superfamily. Long chain multifunctional peptide (group 2) family. As to expression, expressed by the venom gland.

It localises to the secreted. Functionally, amphipathic peptide that shows bradykinin potentiating activity and antimicrobial activities against bacteria and fungi. Has higher antibacterial activities against Gram-negative than against Gram-positive bacteria. Also inhibits NADPH oxidase-dependent superoxide production (IC(50) is 0.4 uM on granulocytes stimulated with PMA, IC(50) is 0.51 uM on HL-60 cells undifferentiated and IC(50) is 0.53 uM on HL-60 cells treated with DMSO). The C-terminal peptide shows a higher bradykinin potentiating activity than the complete peptide. This is Bradykinin-potentiating peptide BmKbpp from Olivierus martensii (Manchurian scorpion).